The sequence spans 266 residues: Small ribosomal subunit protein uS2 (266 aa).

Residues 238-266 are disordered; the sequence is EFASAPDAGKKGRQAQPKKGKRASDAAAE. The span at 248 to 258 shows a compositional bias: basic residues; the sequence is KGRQAQPKKGK.

The protein belongs to the universal ribosomal protein uS2 family.

The protein is Small ribosomal subunit protein uS2 of Xylella fastidiosa (strain M12).